The chain runs to 62 residues: Large ribosomal subunit protein bL33 (62 aa).

This sequence belongs to the bacterial ribosomal protein bL33 family.

This Bacteroides fragilis (strain ATCC 25285 / DSM 2151 / CCUG 4856 / JCM 11019 / LMG 10263 / NCTC 9343 / Onslow / VPI 2553 / EN-2) protein is Large ribosomal subunit protein bL33.